The primary structure comprises 451 residues: D(1A) dopamine receptor (451 aa).

Over 1-22 (MTFNITSMDEDVLLTERESSFR) the chain is Extracellular. The N-linked (GlcNAc...) asparagine glycan is linked to asparagine 4. Residues 23-48 (VLTGCFLSVLILSTLLGNTLVCAAVI) form a helical membrane-spanning segment. The Cytoplasmic segment spans residues 49 to 59 (RFRHLRSKVTN). A helical transmembrane segment spans residues 60-86 (FFVISLAVSDLLVAVLVMPWKAVAEIA). The Extracellular segment spans residues 87–95 (GFWPFGTFC). Cysteines 95 and 185 form a disulfide. Residues 96-118 (NIWVAFDIMCSTASILNLCVISV) form a helical membrane-spanning segment. The Cytoplasmic segment spans residues 119–137 (DRYWAISSPFRYERKMTPK). The helical transmembrane segment at 138-162 (VAFIMIGVAWTLSVLISFIPVQLNW) threads the bilayer. Residues 163-191 (HKAKTTSFFDLNITLHDRTMDNCDSSLNR) lie on the Extracellular side of the membrane. Residues 192-217 (TYAISSSLISFYIPVAIMIVTYTRIY) form a helical membrane-spanning segment. The Cytoplasmic portion of the chain corresponds to 218-271 (RIAAKQIRRISALERAAVHAKNCQNSTSNRNSLDCQQPESSLKTSFKRETKVLK). A helical membrane pass occupies residues 272–298 (TLSVIMGVFVCCWLPFFILNCIVPFCD). Topologically, residues 299–315 (PSLTTSGTEPFCISSTT) are extracellular. Residues 316–340 (FDVFVWFGWANSSLNPIIYAFNADF) traverse the membrane as a helical segment. Residues 341-451 (RKAFSNLLGC…PITQNGQPKT (111 aa)) are Cytoplasmic-facing. Cysteine 350 carries the S-palmitoyl cysteine lipid modification.

The protein belongs to the G-protein coupled receptor 1 family. Brain.

It is found in the cell membrane. The protein localises to the cell projection. It localises to the cilium membrane. In terms of biological role, dopamine receptor whose activity is mediated by G proteins which activate adenylyl cyclase. In Xenopus laevis (African clawed frog), this protein is D(1A) dopamine receptor (drd1).